The primary structure comprises 427 residues: MNSITLKPIRYIEGEVNLPGSKSLSNRALLIAALAEGTTRITNLLESDDTRHMLNALKLLGVEYTLSEDRTECTVVGNGGPFHTKEPLELFLGNAGTAMRPLCAALTLGSGTYVLTGEPRMKERPIGHLVDALREAGAKITYLENEGYPPLKIEADGLKGGEVRIDGSISSQFLTALLMAAPMARGDMQIDIVGELVSKPYIDITLHIMKQFGVEVRNENYERFFIKGGQIYQALETFMVEGDASSASYFLAAAAIKGGTVKVTGIGKTSVQGDVAFADVLEKMGAKVEWGDDYVSVSRGELNAVNMDFNHIPDAAMTIATTALFAKGTTTLRNIYNWRVKETDRLHAMAMELRKVGAKVEEGEDYLTITPPVQLKHAAIDTYDDHRMAMCFSLLALDPVSVTINEPECTAKTFPTYFEVLESISSY.

3-phosphoshikimate contacts are provided by Lys22, Ser23, and Arg27. Residue Lys22 coordinates phosphoenolpyruvate. The phosphoenolpyruvate site is built by Gly96 and Arg124. The 3-phosphoshikimate site is built by Ser170, Ser171, Gln172, Ser198, Asp314, Asn337, and Lys341. Residue Gln172 coordinates phosphoenolpyruvate. The active-site Proton acceptor is Asp314. Phosphoenolpyruvate-binding residues include Arg345, Arg387, and Lys412.

This sequence belongs to the EPSP synthase family. In terms of assembly, monomer.

It localises to the cytoplasm. The catalysed reaction is 3-phosphoshikimate + phosphoenolpyruvate = 5-O-(1-carboxyvinyl)-3-phosphoshikimate + phosphate. Its pathway is metabolic intermediate biosynthesis; chorismate biosynthesis; chorismate from D-erythrose 4-phosphate and phosphoenolpyruvate: step 6/7. Functionally, catalyzes the transfer of the enolpyruvyl moiety of phosphoenolpyruvate (PEP) to the 5-hydroxyl of shikimate-3-phosphate (S3P) to produce enolpyruvyl shikimate-3-phosphate and inorganic phosphate. This Sulfurovum sp. (strain NBC37-1) protein is 3-phosphoshikimate 1-carboxyvinyltransferase.